Here is a 139-residue protein sequence, read N- to C-terminus: Growth factor (139 aa).

The first 19 residues, 1–19 (MSMKYLMLLFATMIIRSFA), serve as a signal peptide directing secretion. Residue Asn-34 is glycosylated (N-linked (GlcNAc...) asparagine; by host). In terms of domain architecture, EGF-like spans 41 to 81 (AIRLCGPEGDGYCLHGDCIHARDINGMYCRCSHGYTGIRCQ). Intrachain disulfides connect Cys-45–Cys-58, Cys-53–Cys-69, and Cys-71–Cys-80. The N-linked (GlcNAc...) asparagine; by host glycan is linked to Asn-95.

It belongs to the orthopoxvirus OPG019 family.

The protein resides in the secreted. Its function is as follows. Stimulates cellular proliferation (hyperplasia)and mobility around infected cells to promote rapid and efficient spread of infection. This Camelus protein is Growth factor (OPG019).